A 237-amino-acid chain; its full sequence is Small ribosomal subunit protein eS4 (237 aa).

An S4 RNA-binding domain is found at Leu-38–Ile-110.

The protein belongs to the eukaryotic ribosomal protein eS4 family.

The sequence is that of Small ribosomal subunit protein eS4 from Pyrobaculum calidifontis (strain DSM 21063 / JCM 11548 / VA1).